The chain runs to 427 residues: Piwi protein (427 aa).

Positions 38 to 167 (PYEVPSLKYN…VQFVSKLGGK (130 aa)) are mid domain. The region spanning 110 to 406 (GIMLVLPEYN…VAGIIANVNR (297 aa)) is the Piwi domain. Residues 118–124 (YNTPLYY) form a binds 5'-phosphorylated end of guide DNA region. The segment at 147 to 148 (RN) is binds target DNA. The binds guide DNA stretch occupies residues 150-155 (TFYVDN). Residues Q159 and L427 each contribute to the a divalent metal cation site. The PIWI domain stretch occupies residues 168–427 (PWILNVDPEK…RSLQTNPWFL (260 aa)).

This sequence belongs to the argonaute family. Short pAgo subfamily. As to quaternary structure, homodimer probably stabilized by DNA. Each subunit is capable of interacting with a DNA molecule. It depends on a divalent metal cation as a cofactor.

Might play a role in defense against invading genetic elements, using short nucleic acid sequences as guides to bind complementary target strands, resulting in slicing of the target nucleic acid. Binds nucleic acids with decreasing affinity in the following order; ssDNA, ssRNA, dsDNA, RNA-DNA, RNA-RNA. Association of the 5' seed region of the guide strand (nucleotides 2-7) with AfPiwi increases affinity for the corresponding target strand; the greatest increase in affinity is for guide DNA with target RNA. This is Piwi protein from Archaeoglobus fulgidus (strain ATCC 49558 / DSM 4304 / JCM 9628 / NBRC 100126 / VC-16).